The following is a 141-amino-acid chain: Cholinesterase (141 aa).

The N-linked (GlcNAc...) asparagine glycan is linked to N39. Residue 49–50 (GG) coordinates substrate. Residue S131 is the Acyl-ester intermediate of the active site. At S131 the chain carries Phosphoserine.

The protein belongs to the type-B carboxylesterase/lipase family. As to quaternary structure, homotetramer; disulfide-linked. Dimer of dimers. Present in most cells except erythrocytes.

Its subcellular location is the secreted. The enzyme catalyses an acylcholine + H2O = a carboxylate + choline + H(+). Its function is as follows. Esterase with broad substrate specificity. Contributes to the inactivation of the neurotransmitter acetylcholine. Can degrade neurotoxic organophosphate esters. This chain is Cholinesterase (BCHE), found in Macaca mulatta (Rhesus macaque).